A 213-amino-acid polypeptide reads, in one-letter code: Ribulose-phosphate 3-epimerase (213 aa).

Serine 9 contributes to the substrate binding site. Positions 34, 36, and 66 each coordinate a divalent metal cation. Aspartate 36 functions as the Proton acceptor in the catalytic mechanism. Substrate-binding positions include histidine 66, 139 to 142, 166 to 168, and 186 to 187; these read GFGG, DGG, and GS. A divalent metal cation is bound at residue aspartate 166. The Proton donor role is filled by aspartate 166.

It belongs to the ribulose-phosphate 3-epimerase family. Requires Co(2+) as cofactor. It depends on Fe(2+) as a cofactor. The cofactor is Mn(2+). Zn(2+) is required as a cofactor.

The enzyme catalyses D-ribulose 5-phosphate = D-xylulose 5-phosphate. Its pathway is carbohydrate degradation; pentose phosphate pathway; D-xylulose 5-phosphate from D-ribulose 5-phosphate (non-oxidative stage): step 1/1. Its function is as follows. Catalyzes the reversible epimerization of D-ribulose 5-phosphate to D-xylulose 5-phosphate. This chain is Ribulose-phosphate 3-epimerase (RPE1), found in Encephalitozoon cuniculi (strain GB-M1) (Microsporidian parasite).